Reading from the N-terminus, the 91-residue chain is UPF0250 protein NGK_1021 (91 aa).

This sequence belongs to the UPF0250 family.

The sequence is that of UPF0250 protein NGK_1021 from Neisseria gonorrhoeae (strain NCCP11945).